A 322-amino-acid chain; its full sequence is MAPGVGGYRQINKALNICAFEEYLESQQTHLSSLPNVEQISPRVIRVLGQNPGKFTLQGTNTYIVGTGTKRLIIDTGQGIPEWADLIRETLSGGDFLLSDVLLTHWHGDHTGGVPDLLRMYPDLTPRIFKNTPDRTQQPIVDGQIFKVEGATVRAVHSPGHSHDHMCFVLEEEQAMFTGDNVLGSGTAAIEHLSTWMVTLKQMQSHGCKLGYPAHGAVITDLQSKIGSELAGKLRRERQALQALRQASRNGSGGPGKGRLTVKELVAAVHGDRIDDGIRVLALEPFMDEVLRKLAEDGAVGFDMRGVLKNAIPDIKARKRFR.

4 residues coordinate Zn(2+): His105, His107, Asp109, and His110. The active-site Proton donor/acceptor is the Asp109.

It belongs to the metallo-beta-lactamase superfamily. The cofactor is Zn(2+).

It catalyses the reaction atrochrysone carboxyl-[ACP] + H2O = atrochrysone carboxylate + holo-[ACP] + H(+). Its pathway is secondary metabolite biosynthesis. In terms of biological role, atrochrysone carboxyl ACP thioesterase; part of the gene cluster that mediates the biosynthesis of the tetrahydroxanthone dimer neosartorin, which exhibits antibacterial activity. The two different monomeric units appear to be synthesized by the same set of enzymes, among which the Baeyer-Villiger monooxygenase nsrF is the key enzyme for the divergence of the biosynthetic routes. The pathway begins with the synthesis of atrochrysone thioester by the polyketide synthase nsrB. The atrochrysone carboxyl ACP thioesterase nsrC then breaks the thioester bond and releases the atrochrysone carboxylic acid from AacuL. Atrochrysone carboxylic acid is decarboxylated by the decarboxylase nsrE, and oxidized by the anthrone oxygenase nsrD to yield emodin. Emodin is then reduced to emodin hydroquinone by the oxidoreductase nsrR. A-ring reduction by the short chain dehydrogenase nsrJ, dehydration by the scytalone dehydratase-like protein nsrI and probable spontaneous re-oxidation, results in overall deoxygenation to chrysophanol. The Baeyer-Villiger monooxygenase nsrF accepts chrysophanol as a substrate to insert one oxygen atom at two different positions to yield the precursors of both monomric units. NsrF is promiscuous/flexible in interacting with the 2 (non methylated and methylated) aromatic rings of chrysophanol, thus diverging the biosynthetic pathway at this point. After the hydrolysis of the lactones, methylesterification by the methyltransferase nsrG yields respectively moniliphenone and 2,2',6'-trihydroxy-4-methyl-6-methoxya-cyldiphenylmethanone. The next steps are the hydroxylation by the FAD-dependent monooxygenase nsrK, followed by isomerization by the monooxygenase nsrQ. The short chain dehydrogenase/reductase nsrO then catalyzes the C-5 ketoreduction to give the xanthone skeleton of blennolide C and 5-acetylblennolide A. The acetyltransferase nsrL has a strict substrate specificity and uses only blennolide A but not blennolide C to yield 5-acetylblennolide A as the single-acetylated product. In the final step of the biosynthesis, the heterodimerization of the 2 xanthones, blennolide C and 5-acetylblennolide A, is catalyzed by the cytochrome P450 monooxygenase nsrP. NsrP can utilize at least three different xanthones as its substrates to perform the dimerization reaction. The protein is Atrochrysone carboxyl ACP thioesterase nsrC of Aspergillus novofumigatus (strain IBT 16806).